Here is a 364-residue protein sequence, read N- to C-terminus: Chorismate synthase (364 aa).

Arginine 47 lines the NADP(+) pocket. FMN is bound by residues 125-127 (RAS), glycine 288, 303-307 (KPTAT), and arginine 329.

The protein belongs to the chorismate synthase family. Homotetramer. The cofactor is FMNH2.

The catalysed reaction is 5-O-(1-carboxyvinyl)-3-phosphoshikimate = chorismate + phosphate. It functions in the pathway metabolic intermediate biosynthesis; chorismate biosynthesis; chorismate from D-erythrose 4-phosphate and phosphoenolpyruvate: step 7/7. Functionally, catalyzes the anti-1,4-elimination of the C-3 phosphate and the C-6 proR hydrogen from 5-enolpyruvylshikimate-3-phosphate (EPSP) to yield chorismate, which is the branch point compound that serves as the starting substrate for the three terminal pathways of aromatic amino acid biosynthesis. This reaction introduces a second double bond into the aromatic ring system. In Synechococcus sp. (strain CC9605), this protein is Chorismate synthase.